A 490-amino-acid polypeptide reads, in one-letter code: GTPase Der (490 aa).

EngA-type G domains lie at 3 to 166 (PVVA…AEAM) and 200 to 373 (IKLA…DSAT). GTP contacts are provided by residues 9 to 16 (GRPNVGKS), 56 to 60 (DTGGI), 118 to 121 (NKVD), 206 to 213 (GKPNVGKS), 253 to 257 (DTAGV), and 318 to 321 (NKWD). Positions 374 to 458 (RRVSTSMLTR…PIQLRFQEGG (85 aa)) constitute a KH-like domain. Positions 470-490 (TVSQERRRKRMVGHIRDKNKD) are disordered.

It belongs to the TRAFAC class TrmE-Era-EngA-EngB-Septin-like GTPase superfamily. EngA (Der) GTPase family. As to quaternary structure, associates with the 50S ribosomal subunit.

Its function is as follows. GTPase that plays an essential role in the late steps of ribosome biogenesis. In Shewanella pealeana (strain ATCC 700345 / ANG-SQ1), this protein is GTPase Der.